A 377-amino-acid chain; its full sequence is MAEKRHGAWFGFGFCGFGQALGSGNSHHSVYSPEPLHASDDICQVSAGWSYTALVTRGGRVELSGSVSGAADGCRDVWASEELLVLLRNKGGSSTEVQAWVPGSALQGEPLWVQNLVSGAKGQGEDEPSRESRMGTLPLLPCARAYVTPEPPFCQPLAPELRVRQLELGAEHVLLLCAAGQVFSWGAGRHGQLGHGTLEAELEPRLLEALQGLRMAKVAAGGWHSVCLSETGDIYIWGWNESGQLALPTRSGTENKAEREEATELNEDGLKEELAVADAGAPAHFIAIQPFPALLDLPLGSDAVMASCGSRHTAVVTRTGELYTWGWGKYGQLGHKDSTSLDRPCCVEYFVERQLEVRAVTCGPWNTYVYAMERDKS.

An interaction with KDM8 region spans residues 1-172; the sequence is MAEKRHGAWF…VRQLELGAEH (172 aa). The RCC1 1 repeat unit spans residues 6–57; it reads HGAWFGFGFCGFGQALGSGNSHHSVYSPEPLHASDDICQVSAGWSYTALVTR. Arg144 is modified ((3R)-3-hydroxyarginine). RCC1 repeat units lie at residues 179–230, 232–289, and 319–372; these read AGQV…CLSE, GDIY…IAIQ, and TGEL…VYAM.

As to quaternary structure, found in a complex with KDM8. Interacts (via N-terminus) with KDM8 (via N-terminus). In terms of processing, specifically hydroxylated (with R stereochemistry) at C-3 of ARG-141 by KDM8.

It is found in the chromosome. Functionally, plays a role in transcriptional repression of satellite repeats, possibly by regulating H3K36 methylation levels in centromeric regions together with KDM8. Possibly together with KDM8, is involved in proper mitotic spindle organization and chromosome segregation. Plays a role in regulating alpha-tubulin deacetylation and cytoskeletal microtubule stability, thereby promoting cell migration and TGF-beta-induced epithelial to mesenchymal transition (EMT), potentially through the inhibition of KDM8. The protein is RCC1 domain-containing protein 1 (Rccd1) of Mus musculus (Mouse).